The following is a 318-amino-acid chain: Aquaporin-1 (318 aa).

Polar residues predominate over residues methionine 1–proline 16. Residues methionine 1–glycine 27 are disordered. The Cytoplasmic segment spans residues methionine 1–asparagine 36. Residues alanine 37–isoleucine 57 form a helical membrane-spanning segment. At glycine 58 to proline 77 the chain is on the extracellular side. The chain crosses the membrane as a helical span at residues phenylalanine 78–phenylalanine 98. At tyrosine 99–proline 108 the chain is on the cytoplasmic side. The short motif at asparagine 107 to alanine 109 is the NPA 1 element. The chain crosses the membrane as a helical span at residues alanine 109–isoleucine 129. Topologically, residues proline 130–glutamine 165 are extracellular. Asparagine 159 carries N-linked (GlcNAc...) asparagine glycosylation. The chain crosses the membrane as a helical span at residues glycine 166–valine 186. Residues glutamate 187–histidine 193 lie on the Cytoplasmic side of the membrane. Residues leucine 194–threonine 214 traverse the membrane as a helical segment. Residues glycine 215 to aspartate 236 lie on the Extracellular side of the membrane. Residues asparagine 219–alanine 221 carry the NPA 2 motif. Residues tryptophan 237–phenylalanine 257 traverse the membrane as a helical segment. The Cytoplasmic portion of the chain corresponds to lysine 258–valine 318. The segment at glycine 268–valine 318 is disordered. A compositionally biased stretch (basic and acidic residues) spans histidine 285 to valine 305.

This sequence belongs to the MIP/aquaporin (TC 1.A.8) family.

It localises to the nucleus membrane. It catalyses the reaction H2O(in) = H2O(out). Functionally, probable water channel involved in responses to changes in environmental conditions and conidiation. Involved in responses to hyperosmotic conditions, oxidative stress and cell wall destabilization. Also required for proper transcriptional activation of genes involved in aurofusarin biosynthesis. Not involved in pathogenicity, but negatively regulates deoxynivalenol (DON) production. This Gibberella zeae (strain ATCC MYA-4620 / CBS 123657 / FGSC 9075 / NRRL 31084 / PH-1) (Wheat head blight fungus) protein is Aquaporin-1.